Reading from the N-terminus, the 156-residue chain is 6,7-dimethyl-8-ribityllumazine synthase (156 aa).

Residues F23, 57 to 59 (AFE), and 81 to 83 (AVI) each bind 5-amino-6-(D-ribitylamino)uracil. 86–87 (ST) provides a ligand contact to (2S)-2-hydroxy-3-oxobutyl phosphate. H89 (proton donor) is an active-site residue. F114 is a 5-amino-6-(D-ribitylamino)uracil binding site. R128 is a (2S)-2-hydroxy-3-oxobutyl phosphate binding site.

This sequence belongs to the DMRL synthase family.

The enzyme catalyses (2S)-2-hydroxy-3-oxobutyl phosphate + 5-amino-6-(D-ribitylamino)uracil = 6,7-dimethyl-8-(1-D-ribityl)lumazine + phosphate + 2 H2O + H(+). It participates in cofactor biosynthesis; riboflavin biosynthesis; riboflavin from 2-hydroxy-3-oxobutyl phosphate and 5-amino-6-(D-ribitylamino)uracil: step 1/2. Its function is as follows. Catalyzes the formation of 6,7-dimethyl-8-ribityllumazine by condensation of 5-amino-6-(D-ribitylamino)uracil with 3,4-dihydroxy-2-butanone 4-phosphate. This is the penultimate step in the biosynthesis of riboflavin. The chain is 6,7-dimethyl-8-ribityllumazine synthase from Campylobacter fetus subsp. fetus (strain 82-40).